The sequence spans 491 residues: Cytochrome P450 2F2 (491 aa).

Position 436 (Cys436) interacts with heme.

Belongs to the cytochrome P450 family. Heme serves as cofactor. As to expression, club cells in lung and liver.

It is found in the endoplasmic reticulum membrane. It localises to the microsome membrane. Its function is as follows. Involved in the regio- and stereoselective transformation of naphthalene to trans-1R-hydroxy-2R-glutathionyl-1,2-dihydronaphthalene in the presence of glutathione and glutathione S-transferases. It specifically catalyzes the production of a very reactive and potentially toxic intermediate, the 2R,2S arene oxide, that is associated with necrosis of the unciliated bronchiolar epithelial cells or club cells in lung. The protein is Cytochrome P450 2F2 (Cyp2f2) of Mus musculus (Mouse).